A 150-amino-acid chain; its full sequence is MKVAIANRQRRHPIGTPRLRKVAERILSALGYPDSELSVVITGDLGIRRVNREYLHKDRPTNVISFAMAEGEFGALNPAMLGDVIISADTAAREAEEGGVSFWSRLCFLLLHGILHITGYDHERSGEAEARRMEAKEREIFAILEREGLV.

Positions 112, 116, and 122 each coordinate Zn(2+).

Belongs to the endoribonuclease YbeY family. The cofactor is Zn(2+).

Its subcellular location is the cytoplasm. In terms of biological role, single strand-specific metallo-endoribonuclease involved in late-stage 70S ribosome quality control and in maturation of the 3' terminus of the 16S rRNA. The sequence is that of Endoribonuclease YbeY from Geobacter metallireducens (strain ATCC 53774 / DSM 7210 / GS-15).